The sequence spans 341 residues: Probable 2' cyclic ADP-D-ribose synthase TcpO (341 aa).

The region spanning 204–336 is the TIR domain; that stretch reads KEYDIFVSHS…EIIHEILERI (133 aa). NAD(+) contacts are provided by residues 213-214 and lysine 243; that span reads SS. Glutamate 279 is a catalytic residue.

It carries out the reaction NAD(+) + H2O = ADP-D-ribose + nicotinamide + H(+). The catalysed reaction is NAD(+) = 2'cADPR + nicotinamide + H(+). In terms of biological role, NAD(+) hydrolase (NADase) that catalyzes cleavage of NAD(+) into ADP-D-ribose (ADPR) and nicotinamide. In addition to ADPR, also generates a cyclization variant of cyclic ADPR (cADPR), termed v-cADPR (probably 2'cADPR). This chain is Probable 2' cyclic ADP-D-ribose synthase TcpO, found in Methanobrevibacter olleyae.